The primary structure comprises 147 residues: D-aminoacyl-tRNA deacylase (147 aa).

The Gly-cisPro motif, important for rejection of L-amino acids motif lies at 136 to 137; sequence GP.

It belongs to the DTD family. Homodimer.

The protein localises to the cytoplasm. The catalysed reaction is glycyl-tRNA(Ala) + H2O = tRNA(Ala) + glycine + H(+). It carries out the reaction a D-aminoacyl-tRNA + H2O = a tRNA + a D-alpha-amino acid + H(+). Its function is as follows. An aminoacyl-tRNA editing enzyme that deacylates mischarged D-aminoacyl-tRNAs. Also deacylates mischarged glycyl-tRNA(Ala), protecting cells against glycine mischarging by AlaRS. Acts via tRNA-based rather than protein-based catalysis; rejects L-amino acids rather than detecting D-amino acids in the active site. By recycling D-aminoacyl-tRNA to D-amino acids and free tRNA molecules, this enzyme counteracts the toxicity associated with the formation of D-aminoacyl-tRNA entities in vivo and helps enforce protein L-homochirality. This is D-aminoacyl-tRNA deacylase from Streptococcus equi subsp. zooepidemicus (strain H70).